The primary structure comprises 209 residues: Large ribosomal subunit protein uL3 (209 aa).

N5-methylglutamine is present on Q150.

The protein belongs to the universal ribosomal protein uL3 family. In terms of assembly, part of the 50S ribosomal subunit. Forms a cluster with proteins L14 and L19. Methylated by PrmB.

Its function is as follows. One of the primary rRNA binding proteins, it binds directly near the 3'-end of the 23S rRNA, where it nucleates assembly of the 50S subunit. This is Large ribosomal subunit protein uL3 from Vibrio campbellii (strain ATCC BAA-1116).